The sequence spans 306 residues: Grixazone synthase (306 aa).

Residues H39, H58, H67, H222, H226, and H248 each coordinate Cu(2+).

This sequence belongs to the tyrosinase family. Cu(2+) is required as a cofactor.

It carries out the reaction 2 3-amino-4-hydroxybenzoate + N-acetyl-L-cysteine + 2 O2 + H(+) = grixazone B + CO2 + 4 H2O. The catalysed reaction is 2 3-amino-4-hydroxybenzaldehyde + N-acetyl-L-cysteine + 2 O2 = grixazone A + formate + 3 H2O + H(+). It catalyses the reaction 4 2-aminophenol + 3 O2 = 2 2-aminophenoxazin-3-one + 6 H2O. With respect to regulation, inhibited by 3-amino-4-hydroxybenzensulfonic acid, 4-hydroxy-3-nitrobenzaldehyde, L-tyrosine, p-hydroxybenzaldehyde. Activated by the copper chaperone GriE. Its function is as follows. Involved in the biosynthesis of the parasiticide antibiotic grixazone. Catalyzes the oxidation of 3-amino-4-hydroxybenzoate (3,4-AHBOA) to yield the corresponding quinone imine which is then non-enzymatically conjugated with the thiol group of N-acetylcysteine. The resultant compound is oxidized to its quinone imine enzymatically and is then dimerized non-enzymatically with another quinone imine oxidized by GriF to yield grixazone B. 3-amino-4-hydroxybenzaldehyde (3,4-AHBAL) can also be used as substrate to yield grixazone A. In the grixazone biosynthetic pathway, it can also function as an o-aminophenol oxidase that catalyzes the formation of the phenoxazinone chromophore from alpha-aminophenol. It can also use 2-amino-4-methylphenol, and to a lesser extent, 3,4-dihydroxybenzaldehyde, catechol and 3,4-dihydroxy-L-phenylalanine (L-DOPA) as substrates. In contrast to tyrosinases, it does not display monophenolase activity. The polypeptide is Grixazone synthase (Streptomyces griseus subsp. griseus (strain JCM 4626 / CBS 651.72 / NBRC 13350 / KCC S-0626 / ISP 5235)).